Here is a 716-residue protein sequence, read N- to C-terminus: Iron-sulfur clusters transporter atm1, mitochondrial (716 aa).

The N-terminal 18 residues, 1–18, are a transit peptide targeting the mitochondrion; sequence MAPSIKLSTMATSLHRAH. Residues 19-123 lie on the Mitochondrial matrix side of the membrane; the sequence is GTSALLRRPR…PKGSWGDKAR (105 aa). Positions 57 to 87 are disordered; sequence LFAPNGSAKDESKPAVSTVPKTTGRGPSDPL. A helical membrane pass occupies residues 124 to 145; sequence VLLAIGLLVGGKVLNVQVPFYF. The 291-residue stretch at 124–414 folds into the ABC transmembrane type-1 domain; it reads VLLAIGLLVG…LGSVYRELRQ (291 aa). Over 146-168 the chain is Mitochondrial intermembrane; the sequence is REIVDSLNIDFSTTGGSVTAVAG. A helical membrane pass occupies residues 169–192; sequence AMILGYGAARVGAVVSQELRNAVF. Residues 193–241 are Mitochondrial matrix-facing; the sequence is ASVAQKAIRKVARNTFEHLLNLDLSFHLSKQTGGLTRAIDRGTKGISFL. A helical transmembrane segment spans residues 242 to 265; the sequence is LTSMVFHIVPTALEISMVCGILTY. Residue N266 is a topological domain, mitochondrial intermembrane. The helical transmembrane segment at 267–287 threads the bilayer; that stretch reads FGWQYAALTALTMVSYTAFTI. Topologically, residues 288–353 are mitochondrial matrix; that stretch reads LTTAWRTKFR…NSIKVATSLA (66 aa). Glutathione-binding positions include 293-297 and 356-359; these read RTKFR and NSGQ. Residues 354-372 form a helical membrane-spanning segment; it reads FLNSGQNIIFSSALTVMMY. The Mitochondrial intermembrane segment spans residues 373–387; it reads MGAHGVATGQLTVGD. The chain crosses the membrane as a helical span at residues 388-409; that stretch reads LVLINQLVFQLSVPLNFLGSVY. G406 serves as a coordination point for glutathione. Topologically, residues 410–716 are mitochondrial matrix; it reads RELRQSLLDM…KEEVGEKKEA (307 aa). One can recognise an ABC transporter domain in the interval 449 to 690; it reads IEFKDVTFGY…NGVYAQLWRA (242 aa). ATP contacts are provided by residues Y458 and 482-493; that span reads GPSGCGKSTLLR. The tract at residues 697–716 is disordered; it reads EEGEVSKKGEKEEVGEKKEA. The span at 700 to 716 shows a compositional bias: basic and acidic residues; sequence EVSKKGEKEEVGEKKEA.

It belongs to the ABC transporter superfamily. ABCB family. Heavy Metal importer (TC 3.A.1.210) subfamily. In terms of assembly, homodimer.

The protein resides in the mitochondrion inner membrane. Functionally, performs an essential function in the generation of cytoplasmic iron-sulfur proteins by mediating the ATP-dependent export of Fe/S cluster precursors synthesized by egt-3 and other mitochondrial proteins. Hydrolyzes ATP. Binds glutathione and may function by transporting a glutathione-conjugated iron-sulfur compound. The sequence is that of Iron-sulfur clusters transporter atm1, mitochondrial from Neurospora crassa (strain ATCC 24698 / 74-OR23-1A / CBS 708.71 / DSM 1257 / FGSC 987).